A 301-amino-acid chain; its full sequence is Probable alpha-L-glutamate ligase (301 aa).

In terms of domain architecture, ATP-grasp spans 104–287 (LQLLSRRGIG…VAGIIIEHLE (184 aa)). ATP-binding positions include Lys-141, 178-179 (EY), Asp-187, and 211-213 (RSN). The Mg(2+) site is built by Asp-248, Glu-260, and Asn-262. Mn(2+) contacts are provided by Asp-248, Glu-260, and Asn-262.

The protein belongs to the RimK family. The cofactor is Mg(2+). It depends on Mn(2+) as a cofactor.

This chain is Probable alpha-L-glutamate ligase, found in Pseudomonas fluorescens (strain Pf0-1).